The chain runs to 180 residues: Fucolectin-3 (180 aa).

Positions Met1–Ser22 are cleaved as a signal peptide. Residues Gln31–Pro179 are F5/8 type C-like. 4 residues coordinate Ca(2+): Asn58, Asp61, Asn63, and Ser72. 3 disulfides stabilise this stretch: Cys73–Cys168, Cys104–Cys105, and Cys130–Cys146. Alpha-L-fucose contacts are provided by His75 and Arg101. A Cell attachment site motif is present at residues Arg101–Asp103. An alpha-L-fucose-binding site is contributed by Arg108. Ca(2+)-binding residues include Cys168 and Glu169.

The protein belongs to the fucolectin family. In terms of assembly, homotrimer. Parenchymal hepatocytes.

The protein localises to the secreted. It localises to the extracellular space. Functionally, acts as a defensive agent. Recognizes blood group fucosylated oligosaccharides including A, B, H and Lewis B-type antigens. Does not recognize Lewis A antigen and has low affinity for monovalent haptens. In Anguilla japonica (Japanese eel), this protein is Fucolectin-3.